A 550-amino-acid polypeptide reads, in one-letter code: Hydroxylamine reductase (550 aa).

Residues Cys3, Cys6, Cys18, and Cys25 each contribute to the [2Fe-2S] cluster site. Hybrid [4Fe-2O-2S] cluster contacts are provided by His249, Glu273, Cys317, Cys405, Cys433, Cys458, Glu492, and Lys494. The residue at position 405 (Cys405) is a Cysteine persulfide.

This sequence belongs to the HCP family. [2Fe-2S] cluster is required as a cofactor. Hybrid [4Fe-2O-2S] cluster serves as cofactor.

It is found in the cytoplasm. The enzyme catalyses A + NH4(+) + H2O = hydroxylamine + AH2 + H(+). Its function is as follows. Catalyzes the reduction of hydroxylamine to form NH(3) and H(2)O. In Shigella boydii serotype 18 (strain CDC 3083-94 / BS512), this protein is Hydroxylamine reductase.